Reading from the N-terminus, the 108-residue chain is uncharacterized protein (108 aa).

The N-myristoyl glycine; by host moiety is linked to residue Gly2.

This is an uncharacterized protein from Acanthamoeba polyphaga (Amoeba).